Reading from the N-terminus, the 329-residue chain is Tyrosine--tRNA ligase (329 aa).

L-tyrosine contacts are provided by Tyr31, Tyr157, Gln161, Asp164, and Gln179. Residues 220-224 carry the 'KMSKS' region motif; that stretch reads KMSKS. Lys223 lines the ATP pocket.

Belongs to the class-I aminoacyl-tRNA synthetase family. TyrS type 4 subfamily. In terms of assembly, homodimer.

The protein resides in the cytoplasm. The enzyme catalyses tRNA(Tyr) + L-tyrosine + ATP = L-tyrosyl-tRNA(Tyr) + AMP + diphosphate + H(+). Functionally, catalyzes the attachment of tyrosine to tRNA(Tyr) in a two-step reaction: tyrosine is first activated by ATP to form Tyr-AMP and then transferred to the acceptor end of tRNA(Tyr). This is Tyrosine--tRNA ligase from Picrophilus torridus (strain ATCC 700027 / DSM 9790 / JCM 10055 / NBRC 100828 / KAW 2/3).